A 244-amino-acid chain; its full sequence is Cell division protein ZapD (244 aa).

This sequence belongs to the ZapD family. As to quaternary structure, interacts with FtsZ.

The protein resides in the cytoplasm. In terms of biological role, cell division factor that enhances FtsZ-ring assembly. Directly interacts with FtsZ and promotes bundling of FtsZ protofilaments, with a reduction in FtsZ GTPase activity. This chain is Cell division protein ZapD, found in Shewanella sp. (strain MR-4).